The following is a 322-amino-acid chain: N-acetyl-gamma-glutamyl-phosphate reductase (322 aa).

The active site involves C132.

It belongs to the NAGSA dehydrogenase family. Type 1 subfamily.

It is found in the cytoplasm. It carries out the reaction N-acetyl-L-glutamate 5-semialdehyde + phosphate + NADP(+) = N-acetyl-L-glutamyl 5-phosphate + NADPH + H(+). Its pathway is amino-acid biosynthesis; L-arginine biosynthesis; N(2)-acetyl-L-ornithine from L-glutamate: step 3/4. Functionally, catalyzes the NADPH-dependent reduction of N-acetyl-5-glutamyl phosphate to yield N-acetyl-L-glutamate 5-semialdehyde. The sequence is that of N-acetyl-gamma-glutamyl-phosphate reductase from Phocaeicola vulgatus (strain ATCC 8482 / DSM 1447 / JCM 5826 / CCUG 4940 / NBRC 14291 / NCTC 11154) (Bacteroides vulgatus).